The sequence spans 323 residues: Peroxisomal targeting signal 2 receptor (323 aa).

WD repeat units lie at residues 65-96 (DWND…QLWD), 109-141 (EHAQ…KLWD), 153-184 (GHES…RIWD), 196-227 (AHQA…RGWD), 240-271 (GHTY…RFWN), and 284-315 (HHTE…KIYD).

It belongs to the WD repeat peroxin-7 family. As to quaternary structure, interacts with PEX5; interaction only takes place when PEX7 is associated with cargo proteins. Interacts with VWA8. As to expression, ubiquitous. Highest expression in pancreas, skeletal muscle and heart.

Its subcellular location is the cytoplasm. It is found in the cytosol. The protein localises to the peroxisome matrix. Its function is as follows. Receptor required for the peroxisomal import of proteins containing a C-terminal PTS2-type peroxisomal targeting signal. Specifically binds to cargo proteins containing a PTS2 peroxisomal targeting signal in the cytosol. Cargo protein-binding triggers interaction with PEX5 and formation of a ternary complex composed of PEX5 and PEX7 along with PTS2-containing cargo proteins, which is tranlocated into peroxisomes by passing through the PEX13-PEX14 docking complex. The chain is Peroxisomal targeting signal 2 receptor from Homo sapiens (Human).